An 849-amino-acid chain; its full sequence is G-type lectin S-receptor-like serine/threonine-protein kinase B120 (849 aa).

Residues 1–25 (MRFFRKTSLYLSLFLYFFLYESSMA) form the signal peptide. Residues 26–153 (ANTIRRGESL…DTDRPIWESF (128 aa)) form the Bulb-type lectin domain. Residues 26–438 (ANTIRRGESL…SEVGENRKTK (413 aa)) are Extracellular-facing. Asn110, Asn191, Asn210, Asn230, Asn273, and Asn282 each carry an N-linked (GlcNAc...) asparagine glycan. An EGF-like; atypical domain is found at 295–332 (PDSECDQYNRCGKFGICDMKGSNGICSCIHGYEQVSVG). 2 disulfide bridges follow: Cys299–Cys311 and Cys305–Cys320. Residues Asn333, Asn349, and Asn388 are each glycosylated (N-linked (GlcNAc...) asparagine). Positions 346 to 427 (CERNISVGED…GGSSLHIRLA (82 aa)) constitute a PAN domain. Cystine bridges form between Cys381–Cys402 and Cys385–Cys391. Residues 439–459 (IAVIVAVLVGVILIGIFALLL) traverse the membrane as a helical segment. The Cytoplasmic segment spans residues 460-849 (WRFKRKKDVS…EITSTVVLGR (390 aa)). A Protein kinase domain is found at 529–814 (FCKENELGRG…TLAAPRQPTF (286 aa)). Residues 535–543 (LGRGGFGPV) and Lys557 each bind ATP. Phosphoserine is present on Ser563. Residues 618-635 (TKQALIDWKLRFSIIEGI) form a caM-binding region. Asp654 (proton acceptor) is an active-site residue. Ser658 and Ser671 each carry phosphoserine. Thr688 is subject to Phosphothreonine. A phosphoserine mark is found at Ser732 and Ser837. Thr844 carries the post-translational modification Phosphothreonine.

This sequence belongs to the protein kinase superfamily. Ser/Thr protein kinase family.

Its subcellular location is the cell membrane. It catalyses the reaction L-seryl-[protein] + ATP = O-phospho-L-seryl-[protein] + ADP + H(+). The catalysed reaction is L-threonyl-[protein] + ATP = O-phospho-L-threonyl-[protein] + ADP + H(+). The protein is G-type lectin S-receptor-like serine/threonine-protein kinase B120 (B120) of Arabidopsis thaliana (Mouse-ear cress).